A 294-amino-acid polypeptide reads, in one-letter code: Small ribosomal subunit biogenesis GTPase RsgA 2, mitochondrial (294 aa).

Residues 1-68 (MQTFSSAAAL…RSFLAPVLPL (68 aa)) constitute a mitochondrion transit peptide. In terms of domain architecture, CP-type G spans 155 to 294 (VSEVLDPPVA…VSFFLSYFIL (140 aa)). Residue 255 to 263 (GPSGVGKSS) participates in GTP binding.

It belongs to the TRAFAC class YlqF/YawG GTPase family.

The protein localises to the mitochondrion. This Arabidopsis thaliana (Mouse-ear cress) protein is Small ribosomal subunit biogenesis GTPase RsgA 2, mitochondrial.